Reading from the N-terminus, the 325-residue chain is tRNA U34 carboxymethyltransferase (325 aa).

Residues K91, W105, K110, G130, 152–154 (DPS), 181–182 (ME), M197, Y201, and R316 contribute to the carboxy-S-adenosyl-L-methionine site.

This sequence belongs to the class I-like SAM-binding methyltransferase superfamily. CmoB family. As to quaternary structure, homotetramer.

It carries out the reaction carboxy-S-adenosyl-L-methionine + 5-hydroxyuridine(34) in tRNA = 5-carboxymethoxyuridine(34) in tRNA + S-adenosyl-L-homocysteine + H(+). Functionally, catalyzes carboxymethyl transfer from carboxy-S-adenosyl-L-methionine (Cx-SAM) to 5-hydroxyuridine (ho5U) to form 5-carboxymethoxyuridine (cmo5U) at position 34 in tRNAs. The protein is tRNA U34 carboxymethyltransferase of Saccharophagus degradans (strain 2-40 / ATCC 43961 / DSM 17024).